The sequence spans 345 residues: GTPase Obg (345 aa).

Residues 1-159 (MHFLDQAKIF…MWVWLRLKLL (159 aa)) enclose the Obg domain. A disordered region spans residues 121-142 (GDGGRGNASYKTSTNRAPRQHG). The OBG-type G domain maps to 160–327 (ADCGLVGLPN…VLDKIIEILG (168 aa)). GTP contacts are provided by residues 166–173 (GLPNAGKS), 191–195 (FTTIR), 212–215 (DIPG), 279–282 (NKID), and 308–310 (SGA). Residues Ser-173 and Thr-193 each contribute to the Mg(2+) site.

This sequence belongs to the TRAFAC class OBG-HflX-like GTPase superfamily. OBG GTPase family. In terms of assembly, monomer. The cofactor is Mg(2+).

It is found in the cytoplasm. Functionally, an essential GTPase which binds GTP, GDP and possibly (p)ppGpp with moderate affinity, with high nucleotide exchange rates and a fairly low GTP hydrolysis rate. Plays a role in control of the cell cycle, stress response, ribosome biogenesis and in those bacteria that undergo differentiation, in morphogenesis control. This chain is GTPase Obg, found in Rhizorhabdus wittichii (strain DSM 6014 / CCUG 31198 / JCM 15750 / NBRC 105917 / EY 4224 / RW1) (Sphingomonas wittichii).